The chain runs to 62 residues: Keratin-associated protein 6-2 (62 aa).

This sequence belongs to the KRTAP type 6 family. Interacts with hair keratins.

In terms of biological role, in the hair cortex, hair keratin intermediate filaments are embedded in an interfilamentous matrix, consisting of hair keratin-associated proteins (KRTAP), which are essential for the formation of a rigid and resistant hair shaft through their extensive disulfide bond cross-linking with abundant cysteine residues of hair keratins. The matrix proteins include the high-sulfur and high-glycine-tyrosine keratins. The protein is Keratin-associated protein 6-2 (KRTAP6-2) of Homo sapiens (Human).